Reading from the N-terminus, the 492-residue chain is MSNFQFAIPTIDYIRILPEIVLAVFGIVVMMADALIPQNNSKKPLGYLSLIGVLVSLGAIACQARYPGMYDVNNGTGFWGMVHVDSFSLFFHVLIALITAAVLLVSFEYMDVQRMRSGEYYAIILFSALGMMLMTSATELVLIFIALEISSIGSYVLAAMRRRVAESAESSLKYFLLGSFATAFFLYGVALIFGATGSTNVYTIAAALQNMHPLQPIIYLAVALMFIGLGFKVAAAPFHVWTPDVYEGAPSPIVALMSTGPKAAAFAVLLRVLFAMNAPGWFWIVWVSAALSMTIGNIGALVQSNVKRLLAYSSIAHAGYMLVAFAAAKDAGISAAIFYTATYAAMNVGAFAVVSHFANTGEKYVTLEDYAGLGRRSPLLAAILTVFLLSLIGIPVTGGFFAKFYVFTSALQSHLVWLTIIGVINSAVGAYYYLRIIVYMYMRDEREEVPVARMPFGLALALAMCLMFTIYLGVLPTQFINYALKSAQDLVR.

Transmembrane regions (helical) follow at residues isoleucine 16 to isoleucine 36, proline 44 to alanine 64, phenylalanine 87 to phenylalanine 107, glycine 118 to threonine 138, leucine 140 to methionine 160, phenylalanine 175 to alanine 195, proline 216 to alanine 236, proline 250 to leucine 270, phenylalanine 282 to valine 302, leucine 309 to lysine 329, isoleucine 333 to valine 353, alanine 381 to phenylalanine 401, valine 416 to valine 438, and proline 455 to leucine 475.

This sequence belongs to the complex I subunit 2 family. In terms of assembly, NDH-1 is composed of 14 different subunits. Subunits NuoA, H, J, K, L, M, N constitute the membrane sector of the complex.

The protein localises to the cell inner membrane. It carries out the reaction a quinone + NADH + 5 H(+)(in) = a quinol + NAD(+) + 4 H(+)(out). Functionally, NDH-1 shuttles electrons from NADH, via FMN and iron-sulfur (Fe-S) centers, to quinones in the respiratory chain. The immediate electron acceptor for the enzyme in this species is believed to be ubiquinone. Couples the redox reaction to proton translocation (for every two electrons transferred, four hydrogen ions are translocated across the cytoplasmic membrane), and thus conserves the redox energy in a proton gradient. In Koribacter versatilis (strain Ellin345), this protein is NADH-quinone oxidoreductase subunit N 2.